The primary structure comprises 494 residues: PTS system cellobiose-specific EIIC component (494 aa).

Positions 8–481 (MEKYLVPVAA…IITFVIWVPF (474 aa)) constitute a PTS EIIC type-3 domain. 9 helical membrane-spanning segments follow: residues 32 to 52 (FIGM…SAIV), 92 to 112 (ISAL…AFSW), 119 to 139 (AYGV…FAGL), 188 to 208 (AYFT…KLML), 227 to 247 (FLAI…YYII), 274 to 294 (IFSV…GLHG), 355 to 375 (AFAW…IILF), 406 to 426 (VVLN…SVII), and 463 to 483 (AIVL…PFVI).

The protein resides in the cell membrane. Functionally, the phosphoenolpyruvate-dependent sugar phosphotransferase system (PTS), a major carbohydrate active transport system, catalyzes the phosphorylation of incoming sugar substrates concomitant with their translocation across the cell membrane. Involved in cellobiose transport with PtcA and PtcB. This system can also transport lactose. The protein is PTS system cellobiose-specific EIIC component of Lactococcus lactis subsp. lactis (strain IL1403) (Streptococcus lactis).